The sequence spans 241 residues: ATP synthase subunit a (241 aa).

5 helical membrane passes run 30–50, 89–109, 128–148, 193–213, and 214–234; these read GQIF…VLVG, LPFI…GALI, INTT…AGLS, LAVG…VMLL, and GLFT…FYIG.

Belongs to the ATPase A chain family. In terms of assembly, F-type ATPases have 2 components, CF(1) - the catalytic core - and CF(0) - the membrane proton channel. CF(1) has five subunits: alpha(3), beta(3), gamma(1), delta(1), epsilon(1). CF(0) has four main subunits: a, b, b' and c.

The protein localises to the cellular thylakoid membrane. Key component of the proton channel; it plays a direct role in the translocation of protons across the membrane. The protein is ATP synthase subunit a of Synechococcus sp. (strain CC9311).